The primary structure comprises 133 residues: Large ribosomal subunit protein uL14 (133 aa).

Belongs to the universal ribosomal protein uL14 family. As to quaternary structure, part of the 50S ribosomal subunit. Forms a cluster with proteins L3 and L24e, part of which may contact the 16S rRNA in 2 intersubunit bridges.

Binds to 23S rRNA. Forms part of two intersubunit bridges in the 70S ribosome. The chain is Large ribosomal subunit protein uL14 from Nanoarchaeum equitans (strain Kin4-M).